Consider the following 307-residue polypeptide: Ornithine carbamoyltransferase (307 aa).

Residues 56-59 (STRT), glutamine 83, arginine 107, and 134-137 (HPCQ) each bind carbamoyl phosphate. L-ornithine-binding positions include asparagine 165, aspartate 223, and 227–228 (SM). Residues 263–264 (CL) and arginine 291 each bind carbamoyl phosphate.

The protein belongs to the aspartate/ornithine carbamoyltransferase superfamily. OTCase family.

Its subcellular location is the cytoplasm. It carries out the reaction carbamoyl phosphate + L-ornithine = L-citrulline + phosphate + H(+). The protein operates within amino-acid degradation; L-arginine degradation via ADI pathway; carbamoyl phosphate from L-arginine: step 2/2. Its function is as follows. Reversibly catalyzes the transfer of the carbamoyl group from carbamoyl phosphate (CP) to the N(epsilon) atom of ornithine (ORN) to produce L-citrulline. The chain is Ornithine carbamoyltransferase from Cupriavidus taiwanensis (strain DSM 17343 / BCRC 17206 / CCUG 44338 / CIP 107171 / LMG 19424 / R1) (Ralstonia taiwanensis (strain LMG 19424)).